The chain runs to 272 residues: Ethanolamine ammonia-lyase small subunit (272 aa).

The adenosylcob(III)alamin site is built by valine 161, glutamate 182, and cysteine 211.

It belongs to the EutC family. As to quaternary structure, the basic unit is a heterodimer which dimerizes to form tetramers. The heterotetramers trimerize; 6 large subunits form a core ring with 6 small subunits projecting outwards. The cofactor is adenosylcob(III)alamin.

The protein localises to the bacterial microcompartment. The catalysed reaction is ethanolamine = acetaldehyde + NH4(+). It participates in amine and polyamine degradation; ethanolamine degradation. In terms of biological role, catalyzes the deamination of various vicinal amino-alcohols to oxo compounds. Allows this organism to utilize ethanolamine as the sole source of nitrogen and carbon in the presence of external vitamin B12. This Pseudomonas putida (strain W619) protein is Ethanolamine ammonia-lyase small subunit.